The primary structure comprises 314 residues: Ribosomal RNA small subunit methyltransferase H (314 aa).

S-adenosyl-L-methionine contacts are provided by residues 33-35, Asp-52, Phe-84, Asp-105, and Gln-112; that span reads GGH.

It belongs to the methyltransferase superfamily. RsmH family.

The protein resides in the cytoplasm. It carries out the reaction cytidine(1402) in 16S rRNA + S-adenosyl-L-methionine = N(4)-methylcytidine(1402) in 16S rRNA + S-adenosyl-L-homocysteine + H(+). Specifically methylates the N4 position of cytidine in position 1402 (C1402) of 16S rRNA. The polypeptide is Ribosomal RNA small subunit methyltransferase H (Lactobacillus delbrueckii subsp. bulgaricus (strain ATCC 11842 / DSM 20081 / BCRC 10696 / JCM 1002 / NBRC 13953 / NCIMB 11778 / NCTC 12712 / WDCM 00102 / Lb 14)).